The primary structure comprises 353 residues: Photosystem II D2 protein (353 aa).

An N-acetylthreonine modification is found at Thr2. Residue Thr2 is modified to Phosphothreonine. Residues 41–61 (CAYFALGGWFTGTTFVTSWYT) traverse the membrane as a helical segment. Residue His118 coordinates chlorophyll a. A helical membrane pass occupies residues 125 to 141 (GFMLRQFELARSVQLRP). Residues Gln130 and Asn143 each coordinate pheophytin a. A helical transmembrane segment spans residues 153–166 (VFVSVFLIYPLGQS). His198 provides a ligand contact to chlorophyll a. Residues 208–228 (AALLCAIHGATVENTLFEDGD) form a helical membrane-spanning segment. A plastoquinone-binding residues include His215 and Phe262. His215 serves as a coordination point for Fe cation. Fe cation is bound at residue His269. Residues 279-295 (GLWMSALGVVGLALNLR) traverse the membrane as a helical segment.

Belongs to the reaction center PufL/M/PsbA/D family. As to quaternary structure, PSII is composed of 1 copy each of membrane proteins PsbA, PsbB, PsbC, PsbD, PsbE, PsbF, PsbH, PsbI, PsbJ, PsbK, PsbL, PsbM, PsbT, PsbX, PsbY, PsbZ, Psb30/Ycf12, at least 3 peripheral proteins of the oxygen-evolving complex and a large number of cofactors. It forms dimeric complexes. It depends on The D1/D2 heterodimer binds P680, chlorophylls that are the primary electron donor of PSII, and subsequent electron acceptors. It shares a non-heme iron and each subunit binds pheophytin, quinone, additional chlorophylls, carotenoids and lipids. There is also a Cl(-1) ion associated with D1 and D2, which is required for oxygen evolution. The PSII complex binds additional chlorophylls, carotenoids and specific lipids. as a cofactor.

It localises to the plastid. Its subcellular location is the chloroplast thylakoid membrane. It catalyses the reaction 2 a plastoquinone + 4 hnu + 2 H2O = 2 a plastoquinol + O2. In terms of biological role, photosystem II (PSII) is a light-driven water:plastoquinone oxidoreductase that uses light energy to abstract electrons from H(2)O, generating O(2) and a proton gradient subsequently used for ATP formation. It consists of a core antenna complex that captures photons, and an electron transfer chain that converts photonic excitation into a charge separation. The D1/D2 (PsbA/PsbD) reaction center heterodimer binds P680, the primary electron donor of PSII as well as several subsequent electron acceptors. D2 is needed for assembly of a stable PSII complex. The protein is Photosystem II D2 protein of Populus deltoides (Eastern poplar).